The chain runs to 360 residues: 3-isopropylmalate dehydrogenase (360 aa).

76-89 (GPKWDKIERDIRPE) serves as a coordination point for NAD(+). Substrate contacts are provided by Arg96, Arg106, Arg134, and Asp224. The Mg(2+) site is built by Asp224, Asp248, and Asp252. Position 282–294 (282–294 (GSAPDIAGLGIAN)) interacts with NAD(+).

Belongs to the isocitrate and isopropylmalate dehydrogenases family. LeuB type 1 subfamily. In terms of assembly, homodimer. It depends on Mg(2+) as a cofactor. Mn(2+) serves as cofactor.

The protein resides in the cytoplasm. The catalysed reaction is (2R,3S)-3-isopropylmalate + NAD(+) = 4-methyl-2-oxopentanoate + CO2 + NADH. The protein operates within amino-acid biosynthesis; L-leucine biosynthesis; L-leucine from 3-methyl-2-oxobutanoate: step 3/4. In terms of biological role, catalyzes the oxidation of 3-carboxy-2-hydroxy-4-methylpentanoate (3-isopropylmalate) to 3-carboxy-4-methyl-2-oxopentanoate. The product decarboxylates to 4-methyl-2 oxopentanoate. This chain is 3-isopropylmalate dehydrogenase, found in Pseudomonas putida (strain ATCC 47054 / DSM 6125 / CFBP 8728 / NCIMB 11950 / KT2440).